The primary structure comprises 147 residues: UPF0306 protein YhbP (147 aa).

This sequence belongs to the UPF0306 family.

This is UPF0306 protein YhbP from Escherichia coli O157:H7.